Consider the following 417-residue polypeptide: FK506-binding protein 3 (417 aa).

Disordered stretches follow at residues 42–129 (SLDD…LSPE) and 191–307 (EGCG…DKPK). Acidic residues-rich tracts occupy residues 61–84 (FDDE…EESE), 99–120 (SEEE…EFEE), and 197–222 (CACD…DASD). Composition is skewed to basic and acidic residues over residues 236–249 (ANEK…EPKA) and 256–307 (DQKD…DKPK). A PPIase FKBP-type domain is found at 331–417 (GARVGMRYIG…TFDVKLVSLK (87 aa)).

This sequence belongs to the FKBP-type PPIase family. FKBP3/4 subfamily.

The protein resides in the nucleus. It is found in the nucleolus. The catalysed reaction is [protein]-peptidylproline (omega=180) = [protein]-peptidylproline (omega=0). Its activity is regulated as follows. Inhibited by both FK506 and rapamycin. PPIases accelerate the folding of proteins. It catalyzes the cis-trans isomerization of proline imidic peptide bonds in oligopeptides. The chain is FK506-binding protein 3 (FPR3) from Eremothecium gossypii (strain ATCC 10895 / CBS 109.51 / FGSC 9923 / NRRL Y-1056) (Yeast).